A 914-amino-acid polypeptide reads, in one-letter code: Origin recognition complex subunit 1 (914 aa).

Residues 48–188 (IKLGRGDSVV…PTGEKFVDIN (141 aa)) form the BAH domain. A disordered region spans residues 218–343 (KEIKRGPQKK…PKDPSKPRQM (126 aa)). The segment covering 221–230 (KRGPQKKDKA) has biased composition (basic and acidic residues). S237 is subject to Phosphoserine. The segment covering 247-296 (TDNEDGNEDESSDYESPSDIDVSEDMDSGEISADELEEEEDEEEDEDEEE) has biased composition (acidic residues). Positions 303-313 (NSPRKRGRKIK) are enriched in basic residues. ATP-binding positions include V435 and 479–487 (GTPGVGKTL). Mg(2+) is bound by residues D566 and E567. ATP is bound by residues E567, N600, R704, and 726–733 (GYGYDGKT).

The protein belongs to the ORC1 family. Component of the origin recognition complex (ORC) composed of at least ORC1, ORC2, ORC3, ORC4, ORC5 and ORC6. Interacts with MCM10 and TAH11.

Its subcellular location is the nucleus. Functionally, component of the origin recognition complex (ORC) that binds origins of replication. It has a role in both chromosomal replication and mating type transcriptional silencing. Binds to the ARS consensus sequence (ACS) of origins of replication. The protein is Origin recognition complex subunit 1 (ORC1) of Saccharomyces cerevisiae (strain ATCC 204508 / S288c) (Baker's yeast).